A 445-amino-acid polypeptide reads, in one-letter code: Phosphoglucosamine mutase (445 aa).

Catalysis depends on S101, which acts as the Phosphoserine intermediate. Mg(2+) contacts are provided by S101, D240, D242, and D244. Residue S101 is modified to Phosphoserine.

Belongs to the phosphohexose mutase family. Requires Mg(2+) as cofactor. In terms of processing, activated by phosphorylation.

The enzyme catalyses alpha-D-glucosamine 1-phosphate = D-glucosamine 6-phosphate. Functionally, catalyzes the conversion of glucosamine-6-phosphate to glucosamine-1-phosphate. This Pseudomonas paraeruginosa (strain DSM 24068 / PA7) (Pseudomonas aeruginosa (strain PA7)) protein is Phosphoglucosamine mutase.